The sequence spans 806 residues: MGDTMVEPVPAKLSDPTLVLRGNGGSPLCVITEGVGEAQMVIDPDVAEKACQDVLDKVKLIRGSSAESLDKIDGSDTGDGGSLANGDAGPRHSESCGPPVSASRITEEEESLIDINSVKSARRRQKNNSAKQSWLLRLFECKLFDVSMAISYLYNSKEPGVQAYIGNRLFCFRYEDVDFYLPQLLNMYIHMDEDVGDAIKPYVVHRCRQSINFSLQCAWLLGAYSSDMHISTQRHSRGTKLRKLILSDELKPAHKKREIPPLSLAPDTGLSPSKRTHQRSKSDATVSISLSSNLKRTSSNPKVENDDEPVRLAPEREFIKSLMAIGKRLATLPTKEQKTQRLISELSLLNHKLPARVWLPTAGFDHHVVRVPHTQAVVLNSKDKAPYLIYVEVLECENFETSLVPVRIPENRIRSTRSVENLPECGITHEQRASSFTTVPNYDNDDEAWSVDDIGELQVELPELHTNSCDNISQFSVDSITSQESKDPVFIAAGDIRRRLSEQLAHTPTTFRRDPEDPSAVALKEPWQEKVRRIREGSPYGHFPNWRLLSVIVKCGDDLRQELLAYQVLKQLQSIWESERVPLWIRPYKILVISADSGMIEPVVNAVSIHQVKKQSQLSLLDYFLQEHGSCTTEAFLTAQRNFVQSCAGYCLVCYLLQVKDRHNGNILLDAEGHIIHIDFGFILSSSPRNLGFETSAFKLTSEFVDVMGGLNGDMFNYYKMLMLQGLIAARKHMDRVVQIVEIMQQGSQLPCFHGSSTIRNLKERFHMNMTEEQLQVLVEQMVDGSMRSITTKLYDGFQYLTNGIM.

Residues leucine 55–serine 247 enclose the PIK helical domain. 2 disordered regions span residues leucine 69 to arginine 104 and alanine 253 to valine 310. Polar residues predominate over residues aspartate 283 to lysine 302. The PI3K/PI4K catalytic domain maps to glutamate 525–threonine 791. Positions valine 531–glycine 537 are G-loop. Positions glutamine 658–asparagine 666 are catalytic loop. An activation loop region spans residues histidine 677–threonine 701.

This sequence belongs to the PI3/PI4-kinase family. Type III PI4K subfamily. Mg(2+) is required as a cofactor. Mn(2+) serves as cofactor.

The protein resides in the endomembrane system. It localises to the mitochondrion outer membrane. Its subcellular location is the rough endoplasmic reticulum membrane. It catalyses the reaction a 1,2-diacyl-sn-glycero-3-phospho-(1D-myo-inositol) + ATP = a 1,2-diacyl-sn-glycero-3-phospho-(1D-myo-inositol 4-phosphate) + ADP + H(+). Phosphorylates phosphatidylinositol (PI) in the first committed step in the production of the second messenger inositol-1,4,5,-trisphosphate (PIP). May play an important role in the inner ear development. The polypeptide is Phosphatidylinositol 4-kinase beta (pi4kb) (Xenopus tropicalis (Western clawed frog)).